The chain runs to 96 residues: Cell division topological specificity factor (96 aa).

It belongs to the MinE family.

Its function is as follows. Prevents the cell division inhibition by proteins MinC and MinD at internal division sites while permitting inhibition at polar sites. This ensures cell division at the proper site by restricting the formation of a division septum at the midpoint of the long axis of the cell. In Nitrosococcus oceani (strain ATCC 19707 / BCRC 17464 / JCM 30415 / NCIMB 11848 / C-107), this protein is Cell division topological specificity factor.